A 449-amino-acid chain; its full sequence is Glutamate--tRNA ligase (449 aa).

The short motif at 10 to 20 is the 'HIGH' region element; it reads PSPTGHLHIGN. The 'KMSKS' region signature appears at 214-218; that stretch reads KLSKR. Lys-217 is a binding site for ATP.

It belongs to the class-I aminoacyl-tRNA synthetase family. Glutamate--tRNA ligase type 1 subfamily. As to quaternary structure, monomer.

The protein resides in the cytoplasm. It carries out the reaction tRNA(Glu) + L-glutamate + ATP = L-glutamyl-tRNA(Glu) + AMP + diphosphate. Functionally, catalyzes the attachment of glutamate to tRNA(Glu) in a two-step reaction: glutamate is first activated by ATP to form Glu-AMP and then transferred to the acceptor end of tRNA(Glu). This Acholeplasma laidlawii (strain PG-8A) protein is Glutamate--tRNA ligase.